The chain runs to 210 residues: Large ribosomal subunit protein uL4 (210 aa).

Residues 47-64 (SRQGTRSQKSRSEVSGSN) show a composition bias toward polar residues. The tract at residues 47–83 (SRQGTRSQKSRSEVSGSNKKPWRQKGTGRARSGSVKS) is disordered.

The protein belongs to the universal ribosomal protein uL4 family. In terms of assembly, part of the 50S ribosomal subunit.

Functionally, one of the primary rRNA binding proteins, this protein initially binds near the 5'-end of the 23S rRNA. It is important during the early stages of 50S assembly. It makes multiple contacts with different domains of the 23S rRNA in the assembled 50S subunit and ribosome. Its function is as follows. Forms part of the polypeptide exit tunnel. This Blochmanniella pennsylvanica (strain BPEN) protein is Large ribosomal subunit protein uL4.